Consider the following 107-residue polypeptide: U1-lycotoxin-Ls1b (107 aa).

Residues 1–20 (MMKVLVVVALLVTLISYSSS) form the signal peptide. The propeptide occupies 21–41 (EGIDDLEADELSSLMANEQTR). 4 disulfide bridges follow: Cys-44-Cys-59, Cys-51-Cys-68, Cys-58-Cys-86, and Cys-70-Cys-84.

This sequence belongs to the neurotoxin 19 (CSTX) family. 04 (U1-Lctx) subfamily. Expressed by the venom gland.

It is found in the secreted. This is U1-lycotoxin-Ls1b from Lycosa singoriensis (Wolf spider).